A 538-amino-acid polypeptide reads, in one-letter code: Solute carrier family 2, facilitated glucose transporter member 9 (538 aa).

At 1–34 the chain is on the cytoplasmic side; that stretch reads MDSRELALASLMCDTGGPGELSVGHQQRRTKKWS. Serine 3 bears the Phosphoserine mark. Residues 35-54 traverse the membrane as a helical segment; sequence FSLVVAALVGAFGSSFLYGY. Residues asparagine 55 and asparagine 71 are each glycosylated (N-linked (GlcNAc...) asparagine). The Extracellular portion of the chain corresponds to 55 to 88; that stretch reads NLSVVNAPTPYIKAFYNGTWYRRHGQPIDPDTLT. A helical membrane pass occupies residues 89–109; the sequence is LLWSVTVSIFAIGGLVGTLMV. Topologically, residues 110–120 are cytoplasmic; it reads KMIGKFLGRKS. Residues 121–143 form a helical membrane-spanning segment; it reads TLLVNNGFAISAALLMACSLRAG. Residues 144 to 148 are Extracellular-facing; sequence TFEML. Residues 149–170 form a helical membrane-spanning segment; the sequence is IVGRFIMGVDGGIALSALPMYL. Topologically, residues 171–181 are cytoplasmic; sequence NEISPKEIRGS. The chain crosses the membrane as a helical span at residues 182-200; it reads LGQVTAIFICIGVFSGQLL. Over 201–211 the chain is Extracellular; that stretch reads GLPELLGREST. Residues 212-233 form a helical membrane-spanning segment; it reads WPYLFGVIIVPALVQLASLPFL. Over 234–297 the chain is Cytoplasmic; sequence PESPRYLLFE…LLRAPFVRWQ (64 aa). Residues 298–319 form a helical membrane-spanning segment; the sequence is VITVIITMASYQLCGLNAIWFY. Residues 320 to 333 are Extracellular-facing; it reads TNSIFGKAGIPQDK. A helical transmembrane segment spans residues 334-356; that stretch reads IPYITLSTGGIETLAAIFSGLVI. Topologically, residues 357 to 362 are cytoplasmic; sequence ERLGRR. A helical membrane pass occupies residues 363-385; the sequence is PLLIGGFGLMALFFGTLTATLTL. Residues 386-390 lie on the Extracellular side of the membrane; sequence QDQAP. Residues 391 to 418 form a helical membrane-spanning segment; that stretch reads WVPYLSIVCILAIIASFCSGPGGIPFIL. Topologically, residues 419 to 429 are cytoplasmic; sequence TGEFFQQSERP. A helical membrane pass occupies residues 430-453; sequence AAFMIAGTVNWLSNFAVGLLFPFI. At 454-458 the chain is on the extracellular side; it reads QKSLD. Residues 459–480 form a helical membrane-spanning segment; that stretch reads SYCFLVFATICIAGATYFYFVL. Over 481 to 538 the chain is Cytoplasmic; sequence PETKNRTHAEISQAFAKRNKAQPPEVKADSAMTEEKANSQTEPDSSSTLDSYGQNKIV. The tract at residues 495–538 is disordered; it reads FAKRNKAQPPEVKADSAMTEEKANSQTEPDSSSTLDSYGQNKIV. Polar residues predominate over residues 518–538; sequence NSQTEPDSSSTLDSYGQNKIV.

This sequence belongs to the major facilitator superfamily. Sugar transporter (TC 2.A.1.1) family. Post-translationally, N-glycosylated. In terms of tissue distribution, highly expressed in the intestine, with high expression in the jejunum and ileum, the segments of the intestine that perform the majority of urate excretion. Isoform 1: Widely expressed. Isoform 1: In kidney, expressed at low levels in proximal tubules. Isoform 2: Primarily expressed in liver and kidney; with specific expression in distal convoluted and connecting tubules of kidney.

Its subcellular location is the basolateral cell membrane. It localises to the apical cell membrane. The enzyme catalyses urate(out) = urate(in). Functionally, high-capacity urate transporter, which may play a role in the urate reabsorption by proximal tubules. May have a residual high-affinity, low-capacity glucose and fructose transporter activity. Transports urate at rates 45- to 60-fold faster than glucose. Does not transport galactose. May mediate small uptake of adenine but not of other nucleobases. This Mus musculus (Mouse) protein is Solute carrier family 2, facilitated glucose transporter member 9.